The chain runs to 1202 residues: MNFDASNDRPLKKRRFFVDDPLDTAVTPAEKSPALDASSSASTHTDPNYSANGSPAQIQTQQEYNFSNGGHATQPATAAGTRTHQAQSPAHDTLSDFDTEAFVSIVGEQVSPETLSQIRKLSDGSLEKAINVYFDGSWKNAGSPGSSQTTLLSCERNASRPSPLHTSREQGTGPAENGADSVTEPISRSKLQPARRYLGAFGVEAWATRSGIGLIKHGDTVNIERARSQPLSTRGRTGKLRVNQKGDVLTRFTNTAGQEIGRLPRETAEWVSTLLDQKICEFRGVCVFAPDRLRVNDTIYLQLRCFMRIEAFQPKELPQKQDDNRATTIFEQEESAEEKQLRLRQVALVQLFDEIGLKSTTQDDEIKKQRKEGLLRAAEMADQEAKKLAKSGNTDSGDEEPAELEQDQLDALYKKAQSFDFSMPEAQPPSSFAMDLRKYQKQALYWMLSKEKDKKSGREVSIHPLWEEYDWPLKDVDDKDLPIIEGINHFYVNPYSGELSLDFPAQEQHCLGGILADEMGLGKTIEMLSLVHSHRNLPPTQSLGNLTRLPVSGVVPAPYTTLVVAPMSLLAQWEGEALKASRNGSMKVLMYYGNEKNVNLREMCSAGNAAAPNMILTSYGVVMSEHRTHQALAPGTSWTPGNLFSVDFFRVILDEAHIIKNRRSKTARACYDLKATHRWVLTGTPIVNRLEDLFSLVRFLRVEPWNNFSFWKTFITAPFESKEVVRAISVVQTVLEPLVLRRTKSMKTPEGEPLVPLPKRTIRIEKVELIEQEREIYNHIYTRAKQTFNSNVAAGTLLKSYSTIFAQLLRLRQTCCHPILTRNKAIVADEEDAAAAADQDSDLKDDMDLQELINRFTATTSDAESSNEPPDPSMKFTAHALRQIQTESAGECPICSEEPMIDPAVTACWHSACKGCLKDYIQHQRDKGVQPRCFSCRADLNPQDIFEVVRYQSPNTTPTEQTPSSIGGDNVYSSSQPPPPPRISLRRINPLSPSAHTSAKIHALLAHLVRVPAGTKSVVFSQFTSFLDLIGPQLTKAGISFVRLDGTMAQKARAEVLAQFTKFETFTQEELDQAESTSAPSGLTPTPKTPKQSSSPSSPTVLLISLKAGGVGLNLTAASNVFMMDPWWSFAIEAQAIDRVHRMGQLRDVNVVRFIVKDSIEERMLRVQERKMGIAGSLGLMGEGNEEERRKERIEELRLLFE.

Over residues 1-10 the composition is skewed to basic and acidic residues; it reads MNFDASNDRP. Disordered regions lie at residues 1–90, 137–187, and 382–403; these read MNFD…QSPA, SWKN…EPIS, and DQEA…EPAE. Polar residues-rich tracts occupy residues 37 to 90 and 143 to 152; these read ASSS…QSPA and SPGSSQTTLL. In terms of domain architecture, Helicase ATP-binding spans 504–703; sequence PAQEQHCLGG…FSLVRFLRVE (200 aa). Position 517–524 (517–524) interacts with ATP; sequence DEMGLGKT. A DEAH box motif is present at residues 654–657; that stretch reads DEAH. The segment at 892 to 937 adopts an RING-type zinc-finger fold; it reads CPICSEEPMIDPAVTACWHSACKGCLKDYIQHQRDKGVQPRCFSCR. Composition is skewed to polar residues over residues 952 to 967 and 1074 to 1083; these read QSPN…SSIG and AESTSAPSGL. 2 disordered regions span residues 952–981 and 1071–1097; these read QSPN…PPPP and LDQA…SSPS. The Helicase C-terminal domain occupies 1003–1198; that stretch reads ALLAHLVRVP…RRKERIEELR (196 aa). Positions 1084–1097 are enriched in low complexity; that stretch reads TPTPKTPKQSSSPS.

The protein belongs to the SNF2/RAD54 helicase family.

Its subcellular location is the cytoplasm. The protein localises to the nucleus. In terms of biological role, probable helicase, member of the UBC2/RAD6 epistasis group. Functions with DNA repair protein RAD18 in error-free postreplication DNA repair. Involved in the maintenance of wild-type rates of instability of simple repetitive sequences such as poly(GT) repeats. Seems to be involved in maintaining a balance which acts in favor of error-prone non-homologous joining during DNA double-strand breaks repairs. The sequence is that of DNA repair protein rad5 (rad5) from Emericella nidulans (strain FGSC A4 / ATCC 38163 / CBS 112.46 / NRRL 194 / M139) (Aspergillus nidulans).